The primary structure comprises 62 residues: Conotoxin Qc5.2 (62 aa).

Positions 1–22 are cleaved as a signal peptide; sequence MRCVPVFIILLLLSPSAPSVDA. Positions 23–48 are excised as a propeptide; sequence HPMTKDDVPQASLHDDAKRTLQVPWM. A Valine amide modification is found at valine 60.

This sequence belongs to the conotoxin T superfamily. Post-translationally, contains 2 disulfide bonds that can be either 'C1-C3, C2-C4' or 'C1-C4, C2-C3', since these disulfide connectivities have been observed for conotoxins with cysteine framework V (for examples, see AC P0DQQ7 and AC P81755). In terms of tissue distribution, expressed by the venom duct.

It localises to the secreted. The protein is Conotoxin Qc5.2 of Conus quercinus (Oak cone).